A 236-amino-acid polypeptide reads, in one-letter code: Small ribosomal subunit protein eS6 (236 aa).

Phosphoserine is present on residues serine 232 and serine 233.

Belongs to the eukaryotic ribosomal protein eS6 family. Phosphorylated.

The chain is Small ribosomal subunit protein eS6 (RPS6) from Kluyveromyces lactis (strain ATCC 8585 / CBS 2359 / DSM 70799 / NBRC 1267 / NRRL Y-1140 / WM37) (Yeast).